The following is a 198-amino-acid chain: Small ribosomal subunit protein uS2 (198 aa).

This sequence belongs to the universal ribosomal protein uS2 family.

The polypeptide is Small ribosomal subunit protein uS2 (Methanobrevibacter smithii (strain ATCC 35061 / DSM 861 / OCM 144 / PS)).